Here is a 347-residue protein sequence, read N- to C-terminus: tRNA N6-adenosine threonylcarbamoyltransferase (347 aa).

The Fe cation site is built by His109 and His113. Substrate is bound by residues 136 to 140 (TVSGG), Asp169, Gly182, Asp186, and Asn284. Fe cation is bound at residue Asp312.

The protein belongs to the KAE1 / TsaD family. Fe(2+) is required as a cofactor.

Its subcellular location is the cytoplasm. The catalysed reaction is L-threonylcarbamoyladenylate + adenosine(37) in tRNA = N(6)-L-threonylcarbamoyladenosine(37) in tRNA + AMP + H(+). Its function is as follows. Required for the formation of a threonylcarbamoyl group on adenosine at position 37 (t(6)A37) in tRNAs that read codons beginning with adenine. Is involved in the transfer of the threonylcarbamoyl moiety of threonylcarbamoyl-AMP (TC-AMP) to the N6 group of A37, together with TsaE and TsaB. TsaD likely plays a direct catalytic role in this reaction. The polypeptide is tRNA N6-adenosine threonylcarbamoyltransferase (Chlorobium phaeobacteroides (strain BS1)).